Reading from the N-terminus, the 927-residue chain is Sodium/calcium exchanger 3 (927 aa).

Positions 1 to 30 are cleaved as a signal peptide; that stretch reads MAWLRLQPLTSAFLHFGLVTFVLFLNGLRA. Over 31–73 the chain is Extracellular; that stretch reads EAGGSGDVPSTGQNNESCSGSSDCKEGVILPIWYPENPSLGDK. Residue N45 is glycosylated (N-linked (GlcNAc...) asparagine). The chain crosses the membrane as a helical span at residues 74–94; it reads IARVIVYFVALIYMFLGVSII. The Cytoplasmic portion of the chain corresponds to 95 to 147; the sequence is ADRFMASIEVITSQEREVTIKKPNGETSTTTIRVWNETVSNLTLMALGSSAPE. The Alpha-1 repeat unit spans residues 140 to 180; that stretch reads ALGSSAPEILLSLIEVCGHGFIAGDLGPSTIVGSAAFNMFI. The helical transmembrane segment at 148-168 threads the bilayer; that stretch reads ILLSLIEVCGHGFIAGDLGPS. Residue T169 is a topological domain, extracellular. A helical membrane pass occupies residues 170 to 190; that stretch reads IVGSAAFNMFIIIGICVYVIP. Residues 191–202 are Cytoplasmic-facing; the sequence is DGETRKIKHLRV. The chain crosses the membrane as a helical span at residues 203–223; sequence FFITAAWSIFAYIWLYMILAV. Residues 224 to 230 lie on the Extracellular side of the membrane; the sequence is FSPGVVQ. A helical membrane pass occupies residues 231–251; sequence VWEGLLTLFFFPVCVLLAWVA. Over 252–726 the chain is Cytoplasmic; the sequence is DKRLLFYKYM…DESGEERLPS (475 aa). The segment at 253–272 is putative calmodulin-binding region; sequence KRLLFYKYMHKKYRTDKHRG. 2 consecutive Calx-beta domains span residues 386–485 and 519–619; these read VHTD…VRLS and ATVT…IALG. Residues E409, D445, D470, D471, I473, E475, E478, D525, D526, D527, E543, D579, E606, E607, and E672 each contribute to the Ca(2+) site. A helical membrane pass occupies residues 727–747; the sequence is CFDYVMHFLTVFWKVLFACVP. Residues 748–754 are Extracellular-facing; it reads PTEYCHG. The chain crosses the membrane as a helical span at residues 755 to 775; that stretch reads WACFAVSILIIGMLTAIIGDL. Over 776 to 778 the chain is Cytoplasmic; the sequence is ASH. A helical membrane pass occupies residues 779–799; that stretch reads FGCTIGLKDSVTAVVFVAFGT. An Alpha-2 repeat occupies 796-832; the sequence is AFGTSVPDTFASKAAALQDVYADASIGNVTGSNAVNV. The Extracellular segment spans residues 800 to 828; sequence SVPDTFASKAAALQDVYADASIGNVTGSN. N823 carries an N-linked (GlcNAc...) asparagine glycan. Residues 829-849 traverse the membrane as a helical segment; the sequence is AVNVFLGIGLAWSVAAIYWAL. Residues 850-860 are Cytoplasmic-facing; it reads QGQEFHVSAGT. The chain crosses the membrane as a helical span at residues 861-881; that stretch reads LAFSVTLFTIFAFVCISVLLY. Over 882 to 903 the chain is Extracellular; sequence RRRPHLGGELGGPRGCKLATTW. Residues 904-924 form a helical membrane-spanning segment; the sequence is LFVSLWLLYILFATLEAYCYI. The Cytoplasmic segment spans residues 925-927; sequence KGF.

The protein belongs to the Ca(2+):cation antiporter (CaCA) (TC 2.A.19) family. SLC8 subfamily. As to quaternary structure, interacts with AKAP1. In terms of tissue distribution, isoform 2 is expressed in brain and skeletal muscle. Isoform 3 is expressed in excitable cells of brain, retina and skeletal muscle. Isoform 4 is expressed in skeletal muscle.

It localises to the cell membrane. Its subcellular location is the perikaryon. It is found in the cell projection. The protein localises to the dendrite. The protein resides in the dendritic spine. It localises to the sarcolemma. Its subcellular location is the cytoplasm. It is found in the sarcoplasm. The protein localises to the cell junction. The protein resides in the mitochondrion outer membrane. It localises to the perinuclear region. Its subcellular location is the endoplasmic reticulum membrane. It carries out the reaction Ca(2+)(in) + 3 Na(+)(out) = Ca(2+)(out) + 3 Na(+)(in). Its activity is regulated as follows. Calcium transport is down-regulated by Na(+) and stimulated by Ca(2+). Functionally, mediates the electrogenic exchange of Ca(2+) against Na(+) ions across the cell membrane, and thereby contributes to the regulation of cytoplasmic Ca(2+) levels and Ca(2+)-dependent cellular processes. Contributes to cellular Ca(2+) homeostasis in excitable cells, both in muscle and in brain. In a first phase, voltage-gated channels mediate the rapid increase of cytoplasmic Ca(2+) levels due to release of Ca(2+) stores from the endoplasmic reticulum. SLC8A3 mediates the export of Ca(2+) from the cell during the next phase, so that cytoplasmic Ca(2+) levels rapidly return to baseline. Contributes to Ca(2+) transport during excitation-contraction coupling in muscle. In neurons, contributes to the rapid decrease of cytoplasmic Ca(2+) levels back to baseline after neuronal activation, and thereby contributes to modulate synaptic plasticity, learning and memory. Required for normal oligodendrocyte differentiation and for normal myelination. Mediates Ca(2+) efflux from mitochondria and contributes to mitochondrial Ca(2+) ion homeostasis. The sequence is that of Sodium/calcium exchanger 3 (SLC8A3) from Homo sapiens (Human).